We begin with the raw amino-acid sequence, 420 residues long: Ribosome biogenesis protein WDR12 homolog (420 aa).

Positions valine 10–glutamate 92 are ubiquitin-like (UBL) domain. WD repeat units follow at residues leucine 104 to serine 142, glycine 143 to aspartate 185, glycine 192 to glycine 231, glycine 250 to glutamate 288, serine 290 to valine 329, glycine 335 to tyrosine 375, and glycine 379 to threonine 417.

Belongs to the WD repeat WDR12/YTM1 family.

It is found in the nucleus. Its subcellular location is the nucleolus. It localises to the nucleoplasm. Its function is as follows. Required for maturation of ribosomal RNAs and formation of the large ribosomal subunit. The polypeptide is Ribosome biogenesis protein WDR12 homolog (Drosophila simulans (Fruit fly)).